The chain runs to 422 residues: Probable alpha-1,6-mannosyltransferase MNN11 (422 aa).

Residues 1–31 are Cytoplasmic-facing; sequence MAIKPRTKGKTYSSRSVGSQWFNRLGFKQNK. Residues 32–52 traverse the membrane as a helical; Signal-anchor for type II membrane protein segment; that stretch reads YGTCKFLSIITAFVFILYFFS. The Lumenal portion of the chain corresponds to 53–422; that stretch reads NRFYPISRSA…GHMYQKIKKS (370 aa).

Belongs to the glycosyltransferase 34 family. Component of the M-Pol II complex composed of ANP1, MNN9, MNN10, MNN11 and HOC1.

Its subcellular location is the golgi apparatus. It localises to the cis-Golgi network membrane. Its function is as follows. Required for synthesis of full-length mannan chains. The M-Pol II complex possesses alpha-1,6-mannosyltransferase activity and is probably involved in the elongation of the mannan backbone of N-linked glycans on cell wall and periplasmic proteins. This chain is Probable alpha-1,6-mannosyltransferase MNN11 (MNN11), found in Saccharomyces cerevisiae (strain ATCC 204508 / S288c) (Baker's yeast).